The primary structure comprises 133 residues: Small ribosomal subunit protein uS8 (133 aa).

The protein belongs to the universal ribosomal protein uS8 family. In terms of assembly, part of the 30S ribosomal subunit. Contacts proteins S5 and S12.

Its function is as follows. One of the primary rRNA binding proteins, it binds directly to 16S rRNA central domain where it helps coordinate assembly of the platform of the 30S subunit. The protein is Small ribosomal subunit protein uS8 of Gloeothece citriformis (strain PCC 7424) (Cyanothece sp. (strain PCC 7424)).